A 114-amino-acid chain; its full sequence is Putative antiporter subunit mnhC2 (114 aa).

Transmembrane regions (helical) follow at residues 3 to 23, 28 to 48, and 72 to 92; these read LILL…ILSI, IVIG…SMGT, and AIVL…LVLV.

It belongs to the CPA3 antiporters (TC 2.A.63) subunit C family. In terms of assembly, may form a heterooligomeric complex that consists of seven subunits: mnhA2, mnhB2, mnhC2, mnhD2, mnhE2, mnhF2 and mnhG2.

It is found in the cell membrane. This Staphylococcus aureus (strain Mu3 / ATCC 700698) protein is Putative antiporter subunit mnhC2 (mnhC2).